The primary structure comprises 199 residues: MLWLALFFGRFSRLEAPQRLVIKKRSDRGQANLPMINERIRFPKIRAIDADGTQLGIMHPRDALRIAEERNLDLVVVSEDAQPPVCRIMDYGKYKFEQEKRAKEARKKQHTADVKEVKMRYTIGEHDYQVRLRDTIRFLKDGDKVKATIMFRGREIQHANLAKDLLMQLAADSAEIGEVQQEPSVEGRNMIMILSPKRT.

The protein belongs to the IF-3 family. In terms of assembly, monomer.

It localises to the cytoplasm. Its function is as follows. IF-3 binds to the 30S ribosomal subunit and shifts the equilibrium between 70S ribosomes and their 50S and 30S subunits in favor of the free subunits, thus enhancing the availability of 30S subunits on which protein synthesis initiation begins. This Gloeobacter violaceus (strain ATCC 29082 / PCC 7421) protein is Translation initiation factor IF-3.